The primary structure comprises 160 residues: Ribosomal RNA large subunit methyltransferase H (160 aa).

S-adenosyl-L-methionine is bound by residues Leu76 and Gly108.

Belongs to the RNA methyltransferase RlmH family. Homodimer.

It localises to the cytoplasm. It catalyses the reaction pseudouridine(1915) in 23S rRNA + S-adenosyl-L-methionine = N(3)-methylpseudouridine(1915) in 23S rRNA + S-adenosyl-L-homocysteine + H(+). In terms of biological role, specifically methylates the pseudouridine at position 1915 (m3Psi1915) in 23S rRNA. The polypeptide is Ribosomal RNA large subunit methyltransferase H (Rhodopseudomonas palustris (strain BisB5)).